Reading from the N-terminus, the 833-residue chain is Leucine--tRNA ligase (833 aa).

A 'HIGH' region motif is present at residues 41-52; the sequence is PYPSGAGLHVGH. Positions 610 to 614 match the 'KMSKS' region motif; the sequence is KMSKS. Lysine 613 contributes to the ATP binding site.

It belongs to the class-I aminoacyl-tRNA synthetase family.

The protein resides in the cytoplasm. The catalysed reaction is tRNA(Leu) + L-leucine + ATP = L-leucyl-tRNA(Leu) + AMP + diphosphate. This chain is Leucine--tRNA ligase, found in Streptococcus pyogenes serotype M4 (strain MGAS10750).